The chain runs to 457 residues: Probable xyloglucan 6-xylosyltransferase 3 (457 aa).

Residues 1 to 40 form a disordered region; the sequence is MGKEDGFRTQKRVSTASSAAAGVLPTTMASGGVRRPPPRG. At 1–51 the chain is on the cytoplasmic side; that stretch reads MGKEDGFRTQKRVSTASSAAAGVLPTTMASGGVRRPPPRGRQIQKTFNNVK. Residues 52 to 71 form a helical; Signal-anchor for type II membrane protein membrane-spanning segment; sequence MTILCGFVTILVLRGTIGIN. Over 72-457 the chain is Lumenal; sequence FGTSDADVVN…TTPLKIEARS (386 aa). 2 N-linked (GlcNAc...) asparagine glycosylation sites follow: asparagine 115 and asparagine 431.

The protein belongs to the glycosyltransferase 34 family.

The protein resides in the golgi apparatus membrane. The catalysed reaction is Transfers an alpha-D-xylosyl residue from UDP-D-xylose to a glucose residue in xyloglucan, forming an alpha-(1-&gt;6)-D-xylosyl-D-glucose linkage.. Functionally, probable xyloglucan xylosyltransferase involved in the biosynthesis of xyloglucan. This is Probable xyloglucan 6-xylosyltransferase 3 from Arabidopsis thaliana (Mouse-ear cress).